A 296-amino-acid chain; its full sequence is 4-hydroxybenzoate octaprenyltransferase (296 aa).

A run of 8 helical transmembrane segments spans residues 29 to 49 (IGIY…ADGV), 55 to 75 (LLIF…INDF), 102 to 122 (AWIT…LTNA), 146 to 166 (YYPQ…AFTA), 169 to 189 (GELP…TVAY), 219 to 239 (LIIG…GNRF), 241 to 261 (LGLC…WEAW), and 275 to 295 (FLHN…DYAL).

The protein belongs to the UbiA prenyltransferase family. Mg(2+) serves as cofactor.

Its subcellular location is the cell inner membrane. It carries out the reaction all-trans-octaprenyl diphosphate + 4-hydroxybenzoate = 4-hydroxy-3-(all-trans-octaprenyl)benzoate + diphosphate. The protein operates within cofactor biosynthesis; ubiquinone biosynthesis. Catalyzes the prenylation of para-hydroxybenzoate (PHB) with an all-trans polyprenyl group. Mediates the second step in the final reaction sequence of ubiquinone-8 (UQ-8) biosynthesis, which is the condensation of the polyisoprenoid side chain with PHB, generating the first membrane-bound Q intermediate 3-octaprenyl-4-hydroxybenzoate. This is 4-hydroxybenzoate octaprenyltransferase from Pseudomonas aeruginosa (strain LESB58).